Here is a 354-residue protein sequence, read N- to C-terminus: Bergaptol O-methyltransferase (354 aa).

Position 121 (H121) interacts with bergaptol. Residues S174, G198, D221, and K255 each coordinate S-adenosyl-L-homocysteine. Residue H259 participates in bergaptol binding. The active-site Proton acceptor is H259.

Belongs to the class I-like SAM-binding methyltransferase superfamily. Cation-independent O-methyltransferase family. COMT subfamily.

The enzyme catalyses a 5-hydroxyfurocoumarin + S-adenosyl-L-methionine = a 5-methoxyfurocoumarin + S-adenosyl-L-homocysteine + H(+). It carries out the reaction bergaptol + S-adenosyl-L-methionine = bergapten + S-adenosyl-L-homocysteine. With respect to regulation, inhibited by Cu(2+), Ni(2+) and Co(2+). The protein is Bergaptol O-methyltransferase of Ammi majus (Bishop's weed).